Consider the following 240-residue polypeptide: Probable transcriptional regulatory protein A2cp1_1765 (240 aa).

This sequence belongs to the TACO1 family.

The protein resides in the cytoplasm. The protein is Probable transcriptional regulatory protein A2cp1_1765 of Anaeromyxobacter dehalogenans (strain 2CP-1 / ATCC BAA-258).